Reading from the N-terminus, the 210-residue chain is Small ribosomal subunit protein uS4 (210 aa).

The tract at residues 30–49 is disordered; the sequence is EKSSLEKRKYPPGLPPKKKG. The S4 RNA-binding domain occupies 99 to 162; sequence RRLDNVLYRM…QKSAFIEENI (64 aa).

It belongs to the universal ribosomal protein uS4 family. As to quaternary structure, part of the 30S ribosomal subunit. Contacts protein S5. The interaction surface between S4 and S5 is involved in control of translational fidelity.

Functionally, one of the primary rRNA binding proteins, it binds directly to 16S rRNA where it nucleates assembly of the body of the 30S subunit. In terms of biological role, with S5 and S12 plays an important role in translational accuracy. The polypeptide is Small ribosomal subunit protein uS4 (Leptospira biflexa serovar Patoc (strain Patoc 1 / Ames)).